The following is a 364-amino-acid chain: Probable endopolygalacturonase B (364 aa).

Positions 1–20 (MHFFQSSLVAATMGAALVAA) are cleaved as a signal peptide. Residues 21-29 (APAADLETR) constitute a propeptide that is removed on maturation. Cysteine 32 and cysteine 47 are disulfide-bonded. Residues asparagine 138 and asparagine 141 are each glycosylated (N-linked (GlcNAc...) asparagine). PbH1 repeat units lie at residues 159-188 (SDHL…DVGS), 189-210 (STYI…AVNS), 211-231 (GEHI…SIGS), 240-261 (VNDV…RIKT), 269-291 (VTGV…VVQQ), and 303-324 (TNGV…TSSA). Aspartate 203 functions as the Proton donor in the catalytic mechanism. Residues cysteine 205 and cysteine 221 are joined by a disulfide bond. The active site involves histidine 225. The cysteines at positions 331 and 336 are disulfide-linked. Asparagine 338 carries an N-linked (GlcNAc...) asparagine glycan. A disulfide bond links cysteine 355 and cysteine 364.

It belongs to the glycosyl hydrolase 28 family.

It is found in the secreted. The catalysed reaction is (1,4-alpha-D-galacturonosyl)n+m + H2O = (1,4-alpha-D-galacturonosyl)n + (1,4-alpha-D-galacturonosyl)m.. In terms of biological role, involved in maceration and soft-rotting of plant tissue. Hydrolyzes the 1,4-alpha glycosidic bonds of de-esterified pectate in the smooth region of the plant cell wall. In Aspergillus fumigatus (strain CBS 144.89 / FGSC A1163 / CEA10) (Neosartorya fumigata), this protein is Probable endopolygalacturonase B (pgaB).